We begin with the raw amino-acid sequence, 223 residues long: Glutathione S-transferase U6 (223 aa).

The GST N-terminal domain maps to 5-84; sequence EEVKLLGIWA…YIDETWKHNP (80 aa). Glutathione-binding positions include 15–16, 41–42, 55–56, and 68–69; these read SP, NK, KI, and ES. A GST C-terminal domain is found at 89-216; sequence DPFQRSKARV…EKHIEHMNNM (128 aa). Thr-150 is subject to Phosphothreonine.

It belongs to the GST superfamily. Tau family.

Its subcellular location is the cytoplasm. It is found in the cytosol. The enzyme catalyses RX + glutathione = an S-substituted glutathione + a halide anion + H(+). May be involved in the conjugation of reduced glutathione to a wide number of exogenous and endogenous hydrophobic electrophiles and have a detoxification role against certain herbicides. The chain is Glutathione S-transferase U6 (GSTU6) from Arabidopsis thaliana (Mouse-ear cress).